A 930-amino-acid chain; its full sequence is Protein translocase subunit SecA (930 aa).

ATP is bound by residues glutamine 87, 105 to 109 (GEGKT), and aspartate 515. Residues cysteine 914, cysteine 916, cysteine 925, and histidine 926 each contribute to the Zn(2+) site.

Belongs to the SecA family. Monomer and homodimer. Part of the essential Sec protein translocation apparatus which comprises SecA, SecYEG and auxiliary proteins SecDF-YajC and YidC. Zn(2+) is required as a cofactor.

The protein localises to the cell inner membrane. It is found in the cytoplasm. The enzyme catalyses ATP + H2O + cellular proteinSide 1 = ADP + phosphate + cellular proteinSide 2.. Part of the Sec protein translocase complex. Interacts with the SecYEG preprotein conducting channel. Has a central role in coupling the hydrolysis of ATP to the transfer of proteins into and across the cell membrane, serving both as a receptor for the preprotein-SecB complex and as an ATP-driven molecular motor driving the stepwise translocation of polypeptide chains across the membrane. The chain is Protein translocase subunit SecA from Burkholderia vietnamiensis (strain G4 / LMG 22486) (Burkholderia cepacia (strain R1808)).